Reading from the N-terminus, the 257-residue chain is Gamma-secretase subunit APH-1B (257 aa).

The next 7 membrane-spanning stretches (helical) occupy residues 5–25 (VFFG…VFTI), 32–52 (IIFL…SSLV), 70–90 (YLLI…RFAY), 115–135 (LLAY…SFVN), 158–178 (YSAF…IVFF), 186–206 (WGIL…TFIS), and 213–233 (LASA…AAGG).

Belongs to the APH-1 family. As to quaternary structure, probable component of the gamma-secretase complex, a complex composed of a presenilin homodimer (PSEN1 or PSEN2), nicastrin (NCSTN), APH1 (APH1A or APH1B) and PEN2. Such minimal complex is sufficient for secretase activity, although other components may exist. Interacts with PSEN1 and PSEN2.

It is found in the membrane. Probable subunit of the gamma-secretase complex, an endoprotease complex that catalyzes the intramembrane cleavage of integral proteins such as Notch receptors and APP (amyloid-beta precursor protein). It probably represents a stabilizing cofactor for the presenilin homodimer that promotes the formation of a stable complex. Probably present in a minority of gamma-secretase complexes compared to APH1A. The protein is Gamma-secretase subunit APH-1B (APH1B) of Pongo abelii (Sumatran orangutan).